Here is a 458-residue protein sequence, read N- to C-terminus: Kelch repeat and BTB domain-containing protein 13 (458 aa).

In terms of domain architecture, BTB spans 7–74; that stretch reads TLVQVWVGGQ…LRGDRPALAA (68 aa). 5 Kelch repeats span residues 159-209, 210-258, 259-305, 307-350, and 352-400; these read AVST…TLGN, KLYI…GFDG, RLYA…QACG, LFVC…VAHR, and SLYV…VVRG.

Component of the BCR(KBTBD13) E3 ubiquitin ligase complex, at least composed of CUL3 and KBTBD13 and RBX1. Interacts with CUL3. In terms of processing, autoubiquitinated. Expressed in skeletal muscle.

It is found in the cytoplasm. Its pathway is protein modification; protein ubiquitination. Substrate-specific adapter of a BCR (BTB-CUL3-RBX1) E3 ubiquitin ligase complex. The protein is Kelch repeat and BTB domain-containing protein 13 (KBTBD13) of Homo sapiens (Human).